A 453-amino-acid chain; its full sequence is MDITVREHDFKHGFIKSNSTFDGLNIDNSKNKKKIQKGFQILYVLLFCSVMCGLFYYVYENVWLQRDNEMNEILKNSEHLTIGFKVENAHDRILKTIKTHKLKNYIKESVNFLNSGLTKTNYLGSSNDNIELVDFQNIMFYGDAEVGDNQQPFTFILDTGSANLWVPSVKCTTAGCLTKHLYDSSKSRTYEKDGTKVEMNYVSGTVSGFFSKDLVTVGNLSLPYKFIEVIDTNGFEPTYTASTFDGILGLGWKDLSIGSVDPIVVELKNQNKIENALFTFYLPVHDKHTGFLTIGGIEERFYEGPLTYEKLNHDLYWQITLDAHVGNIMLEKANCIVDSGTSAITVPTDFLNKMLQNLDVIKVPFLPFYVTLCNNSKLPTFEFTSENGKYTLEPEYYLQHIEDVGPGLCMLNIIGLDFPVPTFILGDPFMRKYFTVFDYDNQSVGIALAKKNL.

Residues 1–37 (MDITVREHDFKHGFIKSNSTFDGLNIDNSKNKKKIQK) lie on the Cytoplasmic side of the membrane. Positions 1–124 (MDITVREHDF…SGLTKTNYLG (124 aa)) are excised as a propeptide. A helical; Signal-anchor for type II membrane protein membrane pass occupies residues 38–58 (GFQILYVLLFCSVMCGLFYYV). Residues 59–453 (YENVWLQRDN…VGIALAKKNL (395 aa)) lie on the Lumenal side of the membrane. The 308-residue stretch at 140 to 447 (FYGDAEVGDN…DYDNQSVGIA (308 aa)) folds into the Peptidase A1 domain. The active site involves D158. Residues C171 and C176 are joined by a disulfide bond. Residue D338 is part of the active site. Residues C373 and C409 are joined by a disulfide bond.

This sequence belongs to the peptidase A1 family. Component of the hemozoin formation complex (HFC) composed of falcipains FP2A and/or FP2B, plasmepsins PMII, PMIII/HAP and PMIV, heme detoxifying protein HDP and falcilysin FLN. The HFC complex is involved in hemoglobin degradation and detoxification of heme in the food vacuole during the asexual blood stage. In terms of processing, not N-glycosylated. Proteolytically cleaved into the soluble active mature form in the digestive vacuole by cysteine protease falcipains; the process begins at the early ring stage. Proteolysis requires an acidic environment. In absence of falcipains, autoprocessing may serve as an alternate activation system.

The protein resides in the membrane. It is found in the vacuole lumen. The protein localises to the vacuole membrane. The catalysed reaction is Hydrolysis of the bonds linking certain hydrophobic residues in hemoglobin or globin. Also cleaves small molecules substrates such as Ala-Leu-Glu-Arg-Thr-Phe-|-Phe(NO2)-Ser-Phe-Pro-Thr.. With respect to regulation, inhibited by pepstatin A. Inhibited by KNI derived compounds (KNI-10742, 10743, 10395, 10333, and 10343). Functionally, during the asexual blood stage, participates in initial cleavage of native host hemoglobin (Hb) resulting in Hb denaturation. May cleave preferentially denatured hemoglobin that has been cleaved by PMI. Digestion of host Hb is an essential step which provides the parasite with amino acids for protein synthesis, and regulates osmolarity. In Plasmodium falciparum (isolate 3D7), this protein is Plasmepsin II.